Here is a 540-residue protein sequence, read N- to C-terminus: Probable tubulin polyglutamylase TTLL2 (540 aa).

The 344-residue stretch at 41 to 384 (LKPLVFRVDE…NGLRSEEKKC (344 aa)) folds into the TTL domain. ATP-binding positions include lysine 169, 175–176 (RG), 197–200 (QKYI), and 210–212 (KCD). Arginine 175 contacts a protein. Position 236 (arginine 236) interacts with L-glutamate. 255-256 (TN) provides a ligand contact to ATP. Residues serine 258 and lysine 278 each contribute to the L-glutamate site. Positions 330, 343, and 345 each coordinate Mg(2+). Lysine 361 contributes to the L-glutamate binding site. The interval 479 to 499 (SQSQPHKMKGPAGDLPEAGST) is disordered.

It belongs to the tubulin--tyrosine ligase family. Requires Mg(2+) as cofactor. As to expression, highly expressed in brain, kidney, liver and testis. Expressed in heart, lung, muscle and spleen.

Its function is as follows. Probable tubulin polyglutamylase that generates side chains of glutamate on the gamma-carboxyl group of specific glutamate residues within the C-terminal tail of target proteins. Similar to TTLL1, may acquire enzymatic activity only in complex with other proteins as it is most likely lacking domains important for autonomous activity. Probably involved in the side-chain initiation step of the polyglutamylation reaction rather than the elongation step. This Mus musculus (Mouse) protein is Probable tubulin polyglutamylase TTLL2.